A 701-amino-acid polypeptide reads, in one-letter code: Arachidonate 12-lipoxygenase, 12R-type (701 aa).

The PLAT domain occupies 2–119 (ATYKVKVATG…TLSLREATGK (118 aa)). The Lipoxygenase domain occupies 120–701 (TTADDTLPIL…PVLIENSISI (582 aa)). The Fe cation site is built by H398, H403, H578, N582, and I701.

This sequence belongs to the lipoxygenase family. Requires Fe cation as cofactor.

The protein localises to the cytoplasm. It localises to the perinuclear region. The enzyme catalyses (5Z,8Z,11Z,14Z)-eicosatetraenoate + O2 = (12R)-hydroperoxy-(5Z,8Z,10E,14Z)-eicosatetraenoate. It catalyses the reaction N-[omega-(9Z,12Z)-octadecadienoyloxy]acyl-beta-D-glucosyl-(1&lt;-&gt;1)-octadecasphing-4E-enine + O2 = N-[omega-(9R)-hydroperoxy-(10E,12Z)-octadecadienoyloxy]acyl-beta-D-glucosyl-(1&lt;-&gt;1)-octadecasphing-4E-enine. It carries out the reaction a N-[omega-(9Z,12Z)-octadecadienoyloxy]-acylsphin-4E-enine + O2 = a N-[omega-(9R)-hydroperoxy-(10E,12Z)-octadecadienoyloxy]-acylsphin-4E-enine. The catalysed reaction is (6Z,9Z,12Z)-octadecatrienoate + O2 = 10-hydroperoxy-(6Z,8E,12Z)-octadecatrienoate. The enzyme catalyses (4Z,7Z,10Z,13Z,16Z,19Z)-docosahexaenoate + O2 = 14-hydroperoxy-(4Z,7Z,10Z,12E,16Z,19Z)-docosahexaenoate. It catalyses the reaction (8Z,11Z,14Z)-eicosatrienoate + O2 = (8Z,10E,14Z)-12-hydroperoxyeicosatrienoate. It carries out the reaction (5Z,8Z,11Z,14Z,17Z)-eicosapentaenoate + O2 = (5Z,7Z,8Z,10E,14Z,17Z)-12-hydroperoxyeicosapentaenoate. The catalysed reaction is (6Z,9Z,12Z)-octadecatrienoate + O2 = 10R-hydroperoxy-(6Z,8E,12Z)-octadecatrienoate. The enzyme catalyses 1-O-methyl-(5Z,8Z,11Z,14Z)-eicosatetraenoate + O2 = 1-O-methyl (5Z,8Z,10E,12R,14Z)-hydroperoxyiecosatetraenoate. It catalyses the reaction 1-O-methyl-(5Z,8Z,11Z,14Z)-eicosatetraenoate + O2 = 1-O-methyl-8-hydroperoxy-(5Z,9E,11Z,14Z)-eicosatetraenoate. It carries out the reaction 1-O-methyl-(5Z,8Z,11Z,14Z)-eicosatetraenoate + O2 = 1-O-methyl-(8R)-hydroperoxy-(5Z,9E,11Z,14Z)-eicosatrienoate. The catalysed reaction is 1-O-methyl-(9Z,12Z)-octadecadienoate + O2 = 1-O-methyl-(9R)-hydroperoxy-(10E,12Z)-octadecadienoate. The enzyme catalyses 1-O-methyl-20-hydroxy-(5Z,8Z,11Z,14Z)-eicosatetraenoate + O2 = 1-O-methyl-8-hydroperoxy-20-hydroxy-(5Z,9E,11Z,14Z)-eicosatetraenoate. It catalyses the reaction 1-O-methyl-20-hydroxy-(5Z,8Z,11Z,14Z)-eicosatetraenoate + O2 = 1-O-methyl-12-hydroperoxy-20-hydroxy-(5Z,8Z,10E,14Z)-eicosatetraenoate. It carries out the reaction 1-O-methyl-20-hydroxy-(5Z,8Z,11Z,14Z)-eicosatetraenoate + O2 = 1-O-methyl-9-hydroperoxy-20-hydroxy-(5Z,7E,11Z,14Z)-eicosatetraenoate. The catalysed reaction is 1-O-methyl-(9Z,12Z)-octadecadienoate + O2 = 1-O-methyl-(13S)-hydroperoxy-(9Z,11E)-octadecadienoate. It functions in the pathway lipid metabolism; hydroperoxy eicosatetraenoic acid biosynthesis. The protein operates within lipid metabolism; sphingolipid metabolism. Increased by calcium. Catalyzes the regio and stereo-specific incorporation of a single molecule of dioxygen into free and esterified polyunsaturated fatty acids generating lipid hydroperoxides that can be further reduced to the corresponding hydroxy species. In the skin, acts upstream of ALOXE3 on the lineolate moiety of esterified omega-hydroxyacyl-sphingosine (EOS) ceramides to produce an epoxy-ketone derivative, a crucial step in the conjugation of omega-hydroxyceramide to membrane proteins. Therefore plays a crucial role in the synthesis of corneocytes lipid envelope and the establishment of the skin barrier to water loss. May also play a role in the regulation of the expression of airway mucins. The sequence is that of Arachidonate 12-lipoxygenase, 12R-type from Rattus norvegicus (Rat).